The chain runs to 496 residues: Cytochrome P450 71A15 (496 aa).

Residues 3–23 (IIIISLCLATILAFLLLKPLL) form a helical membrane-spanning segment. Residue cysteine 439 participates in heme binding.

It belongs to the cytochrome P450 family. Requires heme as cofactor.

Its subcellular location is the membrane. This Arabidopsis thaliana (Mouse-ear cress) protein is Cytochrome P450 71A15 (CYP71A15).